The sequence spans 200 residues: Recombination protein RecR (200 aa).

Residues 58-75 form a C4-type zinc finger; sequence CPLCFTLKESKEADCHFC. Positions 82–177 constitute a Toprim domain; sequence QSLCIVASPK…NISRLALGLP (96 aa).

Belongs to the RecR family.

Its function is as follows. May play a role in DNA repair. It seems to be involved in an RecBC-independent recombinational process of DNA repair. It may act with RecF and RecO. The polypeptide is Recombination protein RecR (Chlamydia pneumoniae (Chlamydophila pneumoniae)).